A 338-amino-acid chain; its full sequence is Limbic system-associated membrane protein (338 aa).

The signal sequence occupies residues 1-28; that stretch reads MVARAQPDRKQLPLVLLRLLCLLPTGLP. 3 Ig-like C2-type domains span residues 29–122, 132–214, and 219–306; these read VRSV…PKTS, PKIS…VRVT, and PTIT…LYLY. 4 N-linked (GlcNAc...) asparagine glycosylation sites follow: Asn-40, Asn-66, Asn-136, and Asn-148. A disulfide bond links Cys-53 and Cys-111. 2 disulfide bridges follow: Cys-153/Cys-197 and Cys-239/Cys-290. Residues Asn-279, Asn-287, Asn-300, and Asn-315 are each glycosylated (N-linked (GlcNAc...) asparagine). A lipid anchor (GPI-anchor amidated asparagine) is attached at Asn-315. Positions 316–338 are cleaved as a propeptide — removed in mature form; it reads GSVSLAVPLWLLAASLLCLLSKC.

Belongs to the immunoglobulin superfamily. IgLON family.

The protein resides in the cell membrane. Its function is as follows. Mediates selective neuronal growth and axon targeting. Probably serves as a recognition molecule for the formation of limbic connections. This is Limbic system-associated membrane protein from Gallus gallus (Chicken).